Here is a 371-residue protein sequence, read N- to C-terminus: Pyruvate dehydrogenase E1 component subunit alpha (371 aa).

Heterodimer of an alpha and a beta chain. It depends on thiamine diphosphate as a cofactor.

It catalyses the reaction N(6)-[(R)-lipoyl]-L-lysyl-[protein] + pyruvate + H(+) = N(6)-[(R)-S(8)-acetyldihydrolipoyl]-L-lysyl-[protein] + CO2. Functionally, the pyruvate dehydrogenase complex catalyzes the overall conversion of pyruvate to acetyl-CoA and CO(2). It contains multiple copies of three enzymatic components: pyruvate dehydrogenase (E1), dihydrolipoamide acetyltransferase (E2) and lipoamide dehydrogenase (E3). The sequence is that of Pyruvate dehydrogenase E1 component subunit alpha from Bacillus cereus.